A 335-amino-acid chain; its full sequence is Nucleoid-associated protein KPN78578_25800 (335 aa).

This sequence belongs to the YejK family.

It is found in the cytoplasm. The protein resides in the nucleoid. This chain is Nucleoid-associated protein KPN78578_25800, found in Klebsiella pneumoniae subsp. pneumoniae (strain ATCC 700721 / MGH 78578).